The sequence spans 500 residues: 4-aminobutyrate aminotransferase, mitochondrial (500 aa).

A mitochondrion-targeting transit peptide spans Met1–Ile28. Residue Cys163 coordinates [2Fe-2S] cluster. Gly164–Ser165 is a binding site for pyridoxal 5'-phosphate. Cys166 is a binding site for [2Fe-2S] cluster. Residue Arg220 participates in substrate binding. Position 231 is an N6-succinyllysine (Lys231). Lys252 is subject to N6-acetyllysine; alternate. Position 252 is an N6-succinyllysine; alternate (Lys252). An N6-acetyllysine mark is found at Lys279 and Lys318. Lys357 carries the N6-(pyridoxal phosphate)lysine modification. Thr381 provides a ligand contact to pyridoxal 5'-phosphate. Lys413 bears the N6-acetyllysine; alternate mark. Lys413 bears the N6-succinyllysine; alternate mark. 2 positions are modified to N6-acetyllysine: Lys452 and Lys470.

Belongs to the class-III pyridoxal-phosphate-dependent aminotransferase family. As to quaternary structure, homodimer; disulfide-linked. Pyridoxal 5'-phosphate serves as cofactor. Requires [2Fe-2S] cluster as cofactor.

Its subcellular location is the mitochondrion matrix. It catalyses the reaction 4-aminobutanoate + 2-oxoglutarate = succinate semialdehyde + L-glutamate. The enzyme catalyses (S)-3-amino-2-methylpropanoate + 2-oxoglutarate = 2-methyl-3-oxopropanoate + L-glutamate. Its function is as follows. Catalyzes the conversion of gamma-aminobutyrate and L-beta-aminoisobutyrate to succinate semialdehyde and methylmalonate semialdehyde, respectively. Can also convert delta-aminovalerate and beta-alanine. The sequence is that of 4-aminobutyrate aminotransferase, mitochondrial (ABAT) from Bos taurus (Bovine).